Reading from the N-terminus, the 540-residue chain is Exopolysaccharide phosphotransferase SCO6022 (540 aa).

The protein belongs to the stealth family.

The sequence is that of Exopolysaccharide phosphotransferase SCO6022 from Streptomyces coelicolor (strain ATCC BAA-471 / A3(2) / M145).